The following is a 252-amino-acid chain: 7-carboxy-7-deazaguanine synthase (252 aa).

Substrate-binding positions include 22–24 and Arg37; that span reads LQG. The 224-residue stretch at 28–251 folds into the Radical SAM core domain; the sequence is FVGEPQAFVR…QVHKLVDFIP (224 aa). [4Fe-4S] cluster contacts are provided by Cys41, Cys45, and Cys48. Position 102 (Thr102) interacts with substrate. Gly104 contributes to the S-adenosyl-L-methionine binding site.

Belongs to the radical SAM superfamily. 7-carboxy-7-deazaguanine synthase family. Homodimer. Requires [4Fe-4S] cluster as cofactor. S-adenosyl-L-methionine is required as a cofactor. It depends on Mg(2+) as a cofactor.

The catalysed reaction is 6-carboxy-5,6,7,8-tetrahydropterin + H(+) = 7-carboxy-7-deazaguanine + NH4(+). Its pathway is purine metabolism; 7-cyano-7-deazaguanine biosynthesis. In terms of biological role, catalyzes the complex heterocyclic radical-mediated conversion of 6-carboxy-5,6,7,8-tetrahydropterin (CPH4) to 7-carboxy-7-deazaguanine (CDG), a step common to the biosynthetic pathways of all 7-deazapurine-containing compounds. The chain is 7-carboxy-7-deazaguanine synthase from Methanopyrus kandleri (strain AV19 / DSM 6324 / JCM 9639 / NBRC 100938).